Reading from the N-terminus, the 85-residue chain is Cell division topological specificity factor (85 aa).

The protein belongs to the MinE family.

Functionally, prevents the cell division inhibition by proteins MinC and MinD at internal division sites while permitting inhibition at polar sites. This ensures cell division at the proper site by restricting the formation of a division septum at the midpoint of the long axis of the cell. This chain is Cell division topological specificity factor, found in Xanthomonas euvesicatoria pv. vesicatoria (strain 85-10) (Xanthomonas campestris pv. vesicatoria).